A 267-amino-acid polypeptide reads, in one-letter code: MASKRIPLVAGNWKMNFDHLEATYFVQKLVWLLRDAHFDFKRCEVALFPSFTSLRSVQVLVEADKLHVAYGAQSVSVTTQGAFTGDVSADMIAHLGCSYVIVGHSERRKYHPEDDANIVDQVRAVLAAGMQPILCVGESFEERRQGIELDFAVGQVRDVTRDLNEEQAAKLIVAYEPVWAIGTGMVATPQSAQDAANAIRNDLKTTFGTKVSDSVRILYGGSVTSKNAAELISQPDVDGFLIGGAALDVEELAKIARLALKSTKSRN.

Position 12-14 (12-14 (NWK)) interacts with substrate. Residue His104 is the Electrophile of the active site. The Proton acceptor role is filled by Glu176. Substrate is bound by residues Gly182, Ser222, and 243–244 (GG).

Belongs to the triosephosphate isomerase family. Homodimer.

Its subcellular location is the cytoplasm. The catalysed reaction is D-glyceraldehyde 3-phosphate = dihydroxyacetone phosphate. Its pathway is carbohydrate biosynthesis; gluconeogenesis. It participates in carbohydrate degradation; glycolysis; D-glyceraldehyde 3-phosphate from glycerone phosphate: step 1/1. Involved in the gluconeogenesis. Catalyzes stereospecifically the conversion of dihydroxyacetone phosphate (DHAP) to D-glyceraldehyde-3-phosphate (G3P). The polypeptide is Triosephosphate isomerase (Bifidobacterium longum (strain DJO10A)).